Here is a 278-residue protein sequence, read N- to C-terminus: 4-diphosphocytidyl-2-C-methyl-D-erythritol kinase (278 aa).

The active site involves Lys-9. 89–99 lines the ATP pocket; the sequence is PVASGIGGGSA. Asp-128 is an active-site residue.

Belongs to the GHMP kinase family. IspE subfamily.

The catalysed reaction is 4-CDP-2-C-methyl-D-erythritol + ATP = 4-CDP-2-C-methyl-D-erythritol 2-phosphate + ADP + H(+). The protein operates within isoprenoid biosynthesis; isopentenyl diphosphate biosynthesis via DXP pathway; isopentenyl diphosphate from 1-deoxy-D-xylulose 5-phosphate: step 3/6. Functionally, catalyzes the phosphorylation of the position 2 hydroxy group of 4-diphosphocytidyl-2C-methyl-D-erythritol. This is 4-diphosphocytidyl-2-C-methyl-D-erythritol kinase from Cereibacter sphaeroides (strain ATCC 17029 / ATH 2.4.9) (Rhodobacter sphaeroides).